The sequence spans 207 residues: Ribonuclease HII (207 aa).

One can recognise an RNase H type-2 domain in the interval E18 to K206. D24, E25, and D115 together coordinate a divalent metal cation.

Belongs to the RNase HII family. The cofactor is Mn(2+). It depends on Mg(2+) as a cofactor.

It is found in the cytoplasm. The catalysed reaction is Endonucleolytic cleavage to 5'-phosphomonoester.. In terms of biological role, endonuclease that specifically degrades the RNA of RNA-DNA hybrids. This chain is Ribonuclease HII, found in Hydrogenovibrio crunogenus (strain DSM 25203 / XCL-2) (Thiomicrospira crunogena).